The chain runs to 346 residues: tRNA N6-adenosine threonylcarbamoyltransferase (346 aa).

Fe cation is bound by residues histidine 110 and histidine 114. Residues leucine 132–glycine 136, aspartate 165, glycine 178, and asparagine 274 each bind substrate. A Fe cation-binding site is contributed by aspartate 298.

This sequence belongs to the KAE1 / TsaD family. It depends on Fe(2+) as a cofactor.

The protein resides in the cytoplasm. It carries out the reaction L-threonylcarbamoyladenylate + adenosine(37) in tRNA = N(6)-L-threonylcarbamoyladenosine(37) in tRNA + AMP + H(+). Its function is as follows. Required for the formation of a threonylcarbamoyl group on adenosine at position 37 (t(6)A37) in tRNAs that read codons beginning with adenine. Is involved in the transfer of the threonylcarbamoyl moiety of threonylcarbamoyl-AMP (TC-AMP) to the N6 group of A37, together with TsaE and TsaB. TsaD likely plays a direct catalytic role in this reaction. The polypeptide is tRNA N6-adenosine threonylcarbamoyltransferase (Borreliella burgdorferi (strain ZS7) (Borrelia burgdorferi)).